The sequence spans 236 residues: Ubiquinone biosynthesis O-methyltransferase (236 aa).

Arginine 39, glycine 59, aspartate 80, and methionine 124 together coordinate S-adenosyl-L-methionine.

It belongs to the methyltransferase superfamily. UbiG/COQ3 family.

The catalysed reaction is a 3-demethylubiquinol + S-adenosyl-L-methionine = a ubiquinol + S-adenosyl-L-homocysteine + H(+). It catalyses the reaction a 3-(all-trans-polyprenyl)benzene-1,2-diol + S-adenosyl-L-methionine = a 2-methoxy-6-(all-trans-polyprenyl)phenol + S-adenosyl-L-homocysteine + H(+). The protein operates within cofactor biosynthesis; ubiquinone biosynthesis. In terms of biological role, O-methyltransferase that catalyzes the 2 O-methylation steps in the ubiquinone biosynthetic pathway. The protein is Ubiquinone biosynthesis O-methyltransferase of Pseudoalteromonas translucida (strain TAC 125).